Consider the following 62-residue polypeptide: UPF0434 protein RL4569 (62 aa).

It belongs to the UPF0434 family.

This chain is UPF0434 protein RL4569, found in Rhizobium johnstonii (strain DSM 114642 / LMG 32736 / 3841) (Rhizobium leguminosarum bv. viciae).